We begin with the raw amino-acid sequence, 333 residues long: Arginase (333 aa).

An N-acetylmethionine modification is found at Met-1. Ser-16 carries the post-translational modification Phosphoserine. Phosphothreonine is present on Thr-77. His-123, Asp-146, His-148, and Asp-150 together coordinate Mn(2+). Substrate is bound by residues 148–152 (HADIN), 159–161 (SGN), and Asp-205. The Mn(2+) site is built by Asp-256 and Asp-258. At Thr-270 the chain carries Phosphothreonine. Residues Thr-270 and Glu-301 each coordinate substrate.

Belongs to the arginase family. As to quaternary structure, homotrimer. Mn(2+) is required as a cofactor.

The catalysed reaction is L-arginine + H2O = urea + L-ornithine. The protein operates within nitrogen metabolism; urea cycle; L-ornithine and urea from L-arginine: step 1/1. In Saccharomyces cerevisiae (strain ATCC 204508 / S288c) (Baker's yeast), this protein is Arginase (CAR1).